Reading from the N-terminus, the 472-residue chain is Sarcalumenin (472 aa).

A signal peptide spans 1-19 (MRALLLFCFVASLLLSGQA). The Dynamin-type G domain maps to 89–330 (ITSKPMVLFL…IENRLENKIA (242 aa)). Residues 99-106 (GPWSVGKS) form a G1 motif region. N-linked (GlcNAc...) asparagine glycosylation is present at S102. The G2 motif stretch occupies residues 127 to 128 (EP). A G3 motif region spans residues 189 to 192 (DTPG). The tract at residues 254 to 257 (NKAD) is G4 motif. Residue P277 is a region of interest, G5 motif. Residues N280 and N388 are each glycosylated (N-linked (GlcNAc...) asparagine).

The protein belongs to the TRAFAC class dynamin-like GTPase superfamily. Dynamin/Fzo/YdjA family. Post-translationally, N-glycosylated. In terms of tissue distribution, detected in skeletal muscle.

The protein localises to the sarcoplasmic reticulum lumen. It localises to the sarcoplasmic reticulum membrane. The protein is Sarcalumenin (SRL) of Oryctolagus cuniculus (Rabbit).